The sequence spans 750 residues: Probable methylmalonyl-CoA mutase large subunit (750 aa).

(R)-methylmalonyl-CoA-binding residues include Tyr91, Met94, Thr101, Arg103, Tyr105, and Ser130. Cob(II)alamin is bound by residues Phe133 and Ala155. Residues Thr211 and Gln213 each contribute to the (R)-methylmalonyl-CoA site. 2 residues coordinate cob(II)alamin: Val222 and Arg223. (R)-methylmalonyl-CoA contacts are provided by Arg223, His260, Arg299, and Ser301. Positions 349, 386, 389, 628, 629, 630, 631, 674, 676, 705, and 728 each coordinate cob(II)alamin. The 133-residue stretch at 616 to 748 (RPRILIAKMG…HRLAERLGYT (133 aa)) folds into the B12-binding domain.

This sequence belongs to the methylmalonyl-CoA mutase family. As to quaternary structure, heterodimer of an alpha and a beta chain. Adenosylcob(III)alamin serves as cofactor.

The enzyme catalyses (R)-methylmalonyl-CoA = succinyl-CoA. It functions in the pathway metabolic intermediate metabolism; propanoyl-CoA degradation; succinyl-CoA from propanoyl-CoA: step 3/3. Catalyzes the isomerization of succinyl-CoA to methylmalonyl-CoA during synthesis of propionate from tricarboxylic acid-cycle intermediates. In Mycobacterium bovis (strain ATCC BAA-935 / AF2122/97), this protein is Probable methylmalonyl-CoA mutase large subunit (mutB).